Here is a 344-residue protein sequence, read N- to C-terminus: Ferredoxin--NADP reductase (344 aa).

Positions 12, 31, 39, 43, 83, 118, 285, and 326 each coordinate FAD.

This sequence belongs to the ferredoxin--NADP reductase type 2 family. As to quaternary structure, homodimer. FAD is required as a cofactor.

The catalysed reaction is 2 reduced [2Fe-2S]-[ferredoxin] + NADP(+) + H(+) = 2 oxidized [2Fe-2S]-[ferredoxin] + NADPH. The protein is Ferredoxin--NADP reductase of Staphylococcus aureus (strain MW2).